Reading from the N-terminus, the 294-residue chain is ATP synthase gamma chain (294 aa).

The protein belongs to the ATPase gamma chain family. In terms of assembly, F-type ATPases have 2 components, CF(1) - the catalytic core - and CF(0) - the membrane proton channel. CF(1) has five subunits: alpha(3), beta(3), gamma(1), delta(1), epsilon(1). CF(0) has three main subunits: a, b and c.

The protein resides in the cell inner membrane. Functionally, produces ATP from ADP in the presence of a proton gradient across the membrane. The gamma chain is believed to be important in regulating ATPase activity and the flow of protons through the CF(0) complex. This chain is ATP synthase gamma chain, found in Paramagnetospirillum magneticum (strain ATCC 700264 / AMB-1) (Magnetospirillum magneticum).